A 217-amino-acid chain; its full sequence is MAYPGYGGGFGNFSIQVPGMQMGQPVPETGPAILLDGYSGPAYSDTYSSAGDSVYTYFSAVAGQDGEVDAEELQRCLTQSGINGTYSPFSLETCRIMIAMLDRDHTGKMGFNAFKELWAALNAWKENFMTVDQDGSGTVEHHELRQAIGLMGYRLSPQTLTTIVKRYSKNGRIFFDDYVACCVKLRALTDFFRKRDHLQQGSANFIYDDFLQGTMAI.

4 consecutive EF-hand domains span residues 48-83 (SSAG…SGIN), 89-122 (FSLE…AALN), 119-154 (AALN…MGYR), and 155-180 (LSPQ…DYVA). Positions 65, 69, and 71 each coordinate Ca(2+). Asp132, Asp134, Ser136, Thr138, and Glu143 together coordinate Ca(2+).

In terms of assembly, homodimer. Interacts with SRI and LCP1. Detected in neutrophils and macrophages (at protein level). Highly expressed in bone marrow.

It localises to the cytoplasm. The protein localises to the cytoplasmic granule membrane. Functionally, calcium-binding protein that may play a role in the adhesion of neutrophils to fibronectin. May play a role in the formation of focal adhesions. The protein is Grancalcin (GCA) of Homo sapiens (Human).